The chain runs to 400 residues: Zinc finger CCHC domain-containing protein 3 (400 aa).

Positions 1 to 157 (MATGGGAEEE…LQDEPPAAGP (157 aa)) are disordered. Composition is skewed to basic and acidic residues over residues 26 to 38 (ARVE…REKM) and 47 to 63 (LAEK…RDET). Positions 66-75 (GASGGLGSPG) are enriched in gly residues. A compositionally biased stretch (basic and acidic residues) spans 91-109 (GDPKGRRRDPTGEASDAYR). The residue at position 198 (Tyr-198) is a Phosphotyrosine. 2 consecutive CCHC-type zinc fingers follow at residues 349-365 (RCFR…YCRK) and 369-384 (CNLC…QCPK).

In terms of assembly, interacts with CGAS. Interacts with RIGI. Interacts with IFIH1/MDA5.

Its subcellular location is the cytoplasm. Functionally, nucleic acid-binding protein involved in innate immune response to DNA and RNA viruses. Binds DNA and RNA in the cytoplasm and acts by promoting recognition of viral nucleic acids by virus sensors, such as RIGI, IFIH1/MDA5 and CGAS. Acts as a co-sensor for recognition of double-stranded DNA (dsDNA) by cGAS in the cytoplasm, thereby playing a role in innate immune response to cytosolic dsDNA and DNA virus. Binds dsDNA and probably acts by promoting sensing of dsDNA by CGAS, leading to enhance CGAS oligomerization and activation. Promotes sensing of viral RNA by RIG-I-like receptors proteins RIGI and IFIH1/MDA5 via two mechanisms: binds double-stranded RNA (dsRNA), enhancing the binding of RIGI and IFIH1/MDA5 to dsRNA and promotes 'Lys-63'-linked ubiquitination and subsequent activation of RIGI and IFIH1/MDA5. The sequence is that of Zinc finger CCHC domain-containing protein 3 from Mus musculus (Mouse).